Reading from the N-terminus, the 252-residue chain is 2-succinyl-6-hydroxy-2,4-cyclohexadiene-1-carboxylate synthase (252 aa).

This sequence belongs to the AB hydrolase superfamily. MenH family. In terms of assembly, monomer.

The catalysed reaction is 5-enolpyruvoyl-6-hydroxy-2-succinyl-cyclohex-3-ene-1-carboxylate = (1R,6R)-6-hydroxy-2-succinyl-cyclohexa-2,4-diene-1-carboxylate + pyruvate. It participates in quinol/quinone metabolism; 1,4-dihydroxy-2-naphthoate biosynthesis; 1,4-dihydroxy-2-naphthoate from chorismate: step 3/7. The protein operates within quinol/quinone metabolism; menaquinone biosynthesis. Catalyzes a proton abstraction reaction that results in 2,5-elimination of pyruvate from 2-succinyl-5-enolpyruvyl-6-hydroxy-3-cyclohexene-1-carboxylate (SEPHCHC) and the formation of 2-succinyl-6-hydroxy-2,4-cyclohexadiene-1-carboxylate (SHCHC). This is 2-succinyl-6-hydroxy-2,4-cyclohexadiene-1-carboxylate synthase from Salmonella arizonae (strain ATCC BAA-731 / CDC346-86 / RSK2980).